The sequence spans 610 residues: UvrABC system protein C (610 aa).

The GIY-YIG domain occupies 16-94; that stretch reads NQPGVYRMYN…IKQYLPKYNV (79 aa). The UVR domain occupies 204 to 239; it reads NQVLSILVEKMEQASRELRFEDAAKARDQIQAIRRV.

Belongs to the UvrC family. As to quaternary structure, interacts with UvrB in an incision complex.

It is found in the cytoplasm. Its function is as follows. The UvrABC repair system catalyzes the recognition and processing of DNA lesions. UvrC both incises the 5' and 3' sides of the lesion. The N-terminal half is responsible for the 3' incision and the C-terminal half is responsible for the 5' incision. In Vibrio cholerae serotype O1 (strain ATCC 39315 / El Tor Inaba N16961), this protein is UvrABC system protein C.